Consider the following 434-residue polypeptide: MISPNPALPTPPHAPTAPGRGARLSRFLSRDTTGGILLLIATVLALVIANSPAADLYERVRGFTFGPEALHLDLSVSAWAADGLLAIFFFVVGLELKQEFVAGSLRDPRVAALPIAAAAGRVIVPAGIFTLINLGAGPEALRGWAIPAATDIAFAVAVVAVVGRRLPPVLRTFLLTLAVVDDLLAITIIAVFYTAGIAFVPLLLASVPLAVFGILVQRGVRAWYVLIPLGVAAWALVHASGIHATIAGVALGLLVPAIATARAGVTHRGTAGREERHALTHFFAERWSPISSGIAVPVFAFFSAGVTVGGLEGLTSSLTDSVAVGIIVALVIGKAAGITGASLLVARLPGIRLDPTLRWPDVLGLSFVAGIGFTVSLLVGELAYGTGSAQDDAVKVGVLIGLLTSAVIGGTLLALRGRWHAAASLHEPVPAAVR.

The span at 1–15 shows a compositional bias: pro residues; that stretch reads MISPNPALPTPPHAP. Positions 1–21 are disordered; it reads MISPNPALPTPPHAPTAPGRG. The next 12 helical transmembrane spans lie at 34–54, 74–94, 112–132, 143–163, 173–193, 196–216, 222–242, 245–265, 294–314, 326–346, 362–382, and 393–413; these read GGILLLIATVLALVIANSPAA, LSVSAWAADGLLAIFFFVVGL, ALPIAAAAGRVIVPAGIFTLI, GWAIPAATDIAFAVAVVAVVG, FLLTLAVVDDLLAITIIAVFY, GIAFVPLLLASVPLAVFGILV, AWYVLIPLGVAAWALVHASGI, TIAGVALGLLVPAIATARAGV, IAVPVFAFFSAGVTVGGLEGL, IIVALVIGKAAGITGASLLVA, VLGLSFVAGIGFTVSLLVGEL, and AVKVGVLIGLLTSAVIGGTLL.

The protein belongs to the NhaA Na(+)/H(+) (TC 2.A.33) antiporter family.

Its subcellular location is the cell membrane. It catalyses the reaction Na(+)(in) + 2 H(+)(out) = Na(+)(out) + 2 H(+)(in). Na(+)/H(+) antiporter that extrudes sodium in exchange for external protons. This Clavibacter michiganensis subsp. michiganensis (strain NCPPB 382) protein is Na(+)/H(+) antiporter NhaA 1.